The following is a 703-amino-acid chain: DnaJ homolog subfamily C member 14 (703 aa).

Residues 1–11 (MAQKHPGERRL) show a composition bias toward basic and acidic residues. A disordered region spans residues 1-229 (MAQKHPGERR…GRHRLARKRS (229 aa)). The segment covering 17–28 (SGGTSLSTSGSS) has biased composition (low complexity). Residues 75–84 (HGPPRGPGPP) are compositionally biased toward pro residues. The span at 91-102 (DESETGSEESGV) shows a compositional bias: acidic residues. A compositionally biased stretch (polar residues) spans 121–133 (SFLSIPSACNCQG). The segment covering 163-176 (GEDEELEEEYDDEE) has biased composition (acidic residues). A compositionally biased stretch (basic residues) spans 193–202 (PLSRRQKHRF). A compositionally biased stretch (basic and acidic residues) spans 203-218 (LIKEDVRDSGRREPKA). Residues 219 to 228 (PGRHRLARKR) show a composition bias toward basic residues. 2 helical membrane passes run 305 to 325 (MMFQ…IRIL) and 327 to 347 (VVGA…QLGW). Positions 444–508 (NPFHVLGVEA…ERRKEYEMKR (65 aa)) constitute a J domain. Disordered regions lie at residues 622-643 (FGSR…PPAD) and 659-703 (MSNG…PFQR). Over residues 673-684 (GTTSTSRPNSSV) the composition is skewed to polar residues. Residues 691 to 703 (PKRRKKVRRPFQR) are compositionally biased toward basic residues.

In terms of assembly, interacts with the FxxxFxxxF motif of DRD1 via its C-terminal domain.

It is found in the endoplasmic reticulum membrane. Regulates the export of target proteins, such as DRD1, from the endoplasmic reticulum to the cell surface. The sequence is that of DnaJ homolog subfamily C member 14 (Dnajc14) from Mus musculus (Mouse).